The chain runs to 284 residues: MVLMIVSGRSGSGKSVALRALEDMGFYCVDNLPVVLLPDLARTLADRQISAAVSIDVRNMPESPEIFEQAMNNLPGAFSPQLLFLDADRNTLIRRYSDTRRLHPLSSKNLSLESAIDKESDLLEPLRSRADLIVDTSEMSVHELAEMLRTRLLGKRERELTMVFESFGFKHGIPIDADYVFDVRFLPNPHWDPKLRPMTGLDKPVAAFLDRHTEVHNFIYQTRSYLELWLPMLETNNRSYLTVAIGCTGGKHRSVYIAEQLADYFRSRGKNVQSRHRTLEKRKT.

Residue 8-15 (GRSGSGKS) participates in ATP binding. 56-59 (DVRN) serves as a coordination point for GTP. The RNA-binding stretch occupies residues 266-284 (RSRGKNVQSRHRTLEKRKT).

This sequence belongs to the RapZ-like family. RapZ subfamily. In terms of assembly, homotrimer.

In terms of biological role, modulates the synthesis of GlmS, by affecting the processing and stability of the regulatory small RNA GlmZ. When glucosamine-6-phosphate (GlcN6P) concentrations are high in the cell, RapZ binds GlmZ and targets it to cleavage by RNase E. Consequently, GlmZ is inactivated and unable to activate GlmS synthesis. Under low GlcN6P concentrations, RapZ is sequestered and inactivated by an other regulatory small RNA, GlmY, preventing GlmZ degradation and leading to synthesis of GlmS. In Salmonella typhimurium (strain LT2 / SGSC1412 / ATCC 700720), this protein is RNase adapter protein RapZ.